Here is a 126-residue protein sequence, read N- to C-terminus: Aspartate 1-decarboxylase (126 aa).

Ser25 acts as the Schiff-base intermediate with substrate; via pyruvic acid in catalysis. Ser25 is modified (pyruvic acid (Ser)). Thr57 is a binding site for substrate. Tyr58 serves as the catalytic Proton donor. 73–75 (GSA) contacts substrate.

Belongs to the PanD family. As to quaternary structure, heterooctamer of four alpha and four beta subunits. The cofactor is pyruvate. In terms of processing, is synthesized initially as an inactive proenzyme, which is activated by self-cleavage at a specific serine bond to produce a beta-subunit with a hydroxyl group at its C-terminus and an alpha-subunit with a pyruvoyl group at its N-terminus.

It is found in the cytoplasm. The enzyme catalyses L-aspartate + H(+) = beta-alanine + CO2. It functions in the pathway cofactor biosynthesis; (R)-pantothenate biosynthesis; beta-alanine from L-aspartate: step 1/1. Catalyzes the pyruvoyl-dependent decarboxylation of aspartate to produce beta-alanine. The chain is Aspartate 1-decarboxylase from Chromobacterium violaceum (strain ATCC 12472 / DSM 30191 / JCM 1249 / CCUG 213 / NBRC 12614 / NCIMB 9131 / NCTC 9757 / MK).